Here is a 114-residue protein sequence, read N- to C-terminus: MGPQLLGYVVLCLLGAGPLEAQVTQNPRYLITVTGKKLTVTCSQNMNHEYMSWYRQDPGLGLRQIYYSMNVEVTDKGDVPEGYKVSRKEKRNFPLILESPSPNQTSLYFCASSL.

The N-terminal stretch at 1-21 (MGPQLLGYVVLCLLGAGPLEA) is a signal peptide. In terms of domain architecture, Ig-like spans 22 to 114 (QVTQNPRYLI…TSLYFCASSL (93 aa)). Cys-42 and Cys-110 form a disulfide bridge. Asn-103 is a glycosylation site (N-linked (GlcNAc...) asparagine).

Alpha-beta TR is a heterodimer composed of an alpha and beta chain; disulfide-linked. The alpha-beta TR is associated with the transmembrane signaling CD3 coreceptor proteins to form the TR-CD3 (TcR or TCR). The assembly of alpha-beta TR heterodimers with CD3 occurs in the endoplasmic reticulum where a single alpha-beta TR heterodimer associates with one CD3D-CD3E heterodimer, one CD3G-CD3E heterodimer and one CD247 homodimer forming a stable octameric structure. CD3D-CD3E and CD3G-CD3E heterodimers preferentially associate with TR alpha and TR beta chains, respectively. The association of the CD247 homodimer is the last step of TcR assembly in the endoplasmic reticulum and is required for transport to the cell surface.

It is found in the cell membrane. Functionally, v region of the variable domain of T cell receptor (TR) beta chain that participates in the antigen recognition. Alpha-beta T cell receptors are antigen specific receptors which are essential to the immune response and are present on the cell surface of T lymphocytes. Recognize peptide-major histocompatibility (MH) (pMH) complexes that are displayed by antigen presenting cells (APC), a prerequisite for efficient T cell adaptive immunity against pathogens. Binding of alpha-beta TR to pMH complex initiates TR-CD3 clustering on the cell surface and intracellular activation of LCK that phosphorylates the ITAM motifs of CD3G, CD3D, CD3E and CD247 enabling the recruitment of ZAP70. In turn ZAP70 phosphorylates LAT, which recruits numerous signaling molecules to form the LAT signalosome. The LAT signalosome propagates signal branching to three major signaling pathways, the calcium, the mitogen-activated protein kinase (MAPK) kinase and the nuclear factor NF-kappa-B (NF-kB) pathways, leading to the mobilization of transcription factors that are critical for gene expression and essential for T cell growth and differentiation. The T cell repertoire is generated in the thymus, by V-(D)-J rearrangement. This repertoire is then shaped by intrathymic selection events to generate a peripheral T cell pool of self-MH restricted, non-autoaggressive T cells. Post-thymic interaction of alpha-beta TR with the pMH complexes shapes TR structural and functional avidity. The chain is T cell receptor beta variable 27 from Homo sapiens (Human).